We begin with the raw amino-acid sequence, 285 residues long: Ribosomal RNA small subunit methyltransferase I (285 aa).

Belongs to the methyltransferase superfamily. RsmI family.

The protein resides in the cytoplasm. It carries out the reaction cytidine(1402) in 16S rRNA + S-adenosyl-L-methionine = 2'-O-methylcytidine(1402) in 16S rRNA + S-adenosyl-L-homocysteine + H(+). Catalyzes the 2'-O-methylation of the ribose of cytidine 1402 (C1402) in 16S rRNA. This Buchnera aphidicola subsp. Schizaphis graminum (strain Sg) protein is Ribosomal RNA small subunit methyltransferase I.